A 205-amino-acid chain; its full sequence is Ribosomal RNA small subunit methyltransferase G (205 aa).

S-adenosyl-L-methionine contacts are provided by residues glycine 66, phenylalanine 71, 119-120 (IE), and arginine 135.

Belongs to the methyltransferase superfamily. RNA methyltransferase RsmG family.

It is found in the cytoplasm. It carries out the reaction guanosine(527) in 16S rRNA + S-adenosyl-L-methionine = N(7)-methylguanosine(527) in 16S rRNA + S-adenosyl-L-homocysteine. Specifically methylates the N7 position of guanine in position 527 of 16S rRNA. This Rhizobium etli (strain CIAT 652) protein is Ribosomal RNA small subunit methyltransferase G.